The following is a 662-amino-acid chain: Calcium-dependent protease (662 aa).

One can recognise a Peptidase S8 domain in the interval 196–529; it reads QWHLKETTIG…YGRINALKAV (334 aa). Residues D233, H270, and S466 each act as charge relay system in the active site. The 128-residue stretch at 535–662 folds into the P/Homo B domain; the sequence is AQPEPVSIFT…IRSLTIELGF (128 aa).

The protein belongs to the peptidase S8 family.

The protein localises to the cytoplasm. Degrades phycobiliproteins in vitro. Has a substrate specificity similar to that of trypsin. In Nostoc sp. (strain PCC 7120 / SAG 25.82 / UTEX 2576), this protein is Calcium-dependent protease (prcA).